Consider the following 219-residue polypeptide: Thiamine-phosphate synthase (219 aa).

Residues 48 to 52 (QFRQK) and Asn-84 contribute to the 4-amino-2-methyl-5-(diphosphooxymethyl)pyrimidine site. 2 residues coordinate Mg(2+): Asp-85 and Asp-104. Ser-123 contacts 4-amino-2-methyl-5-(diphosphooxymethyl)pyrimidine. 150–152 (TPS) lines the 2-[(2R,5Z)-2-carboxy-4-methylthiazol-5(2H)-ylidene]ethyl phosphate pocket. Lys-153 is a binding site for 4-amino-2-methyl-5-(diphosphooxymethyl)pyrimidine. Residues Gly-181 and 199-200 (IS) contribute to the 2-[(2R,5Z)-2-carboxy-4-methylthiazol-5(2H)-ylidene]ethyl phosphate site.

This sequence belongs to the thiamine-phosphate synthase family. Requires Mg(2+) as cofactor.

It catalyses the reaction 2-[(2R,5Z)-2-carboxy-4-methylthiazol-5(2H)-ylidene]ethyl phosphate + 4-amino-2-methyl-5-(diphosphooxymethyl)pyrimidine + 2 H(+) = thiamine phosphate + CO2 + diphosphate. The enzyme catalyses 2-(2-carboxy-4-methylthiazol-5-yl)ethyl phosphate + 4-amino-2-methyl-5-(diphosphooxymethyl)pyrimidine + 2 H(+) = thiamine phosphate + CO2 + diphosphate. The catalysed reaction is 4-methyl-5-(2-phosphooxyethyl)-thiazole + 4-amino-2-methyl-5-(diphosphooxymethyl)pyrimidine + H(+) = thiamine phosphate + diphosphate. The protein operates within cofactor biosynthesis; thiamine diphosphate biosynthesis; thiamine phosphate from 4-amino-2-methyl-5-diphosphomethylpyrimidine and 4-methyl-5-(2-phosphoethyl)-thiazole: step 1/1. In terms of biological role, condenses 4-methyl-5-(beta-hydroxyethyl)thiazole monophosphate (THZ-P) and 2-methyl-4-amino-5-hydroxymethyl pyrimidine pyrophosphate (HMP-PP) to form thiamine monophosphate (TMP). In Helicobacter pylori (strain HPAG1), this protein is Thiamine-phosphate synthase.